The following is a 130-amino-acid chain: Protein TraH (130 aa).

The segment at 1-78 (MSEPKDQSIE…ALEENRRPKA (78 aa)) is disordered. Low complexity predominate over residues 37–54 (PEQATAGQPPAEATAPTP).

Functionally, the initiation process of transfer DNA synthesis requires the interaction of at least three plasmid-specific components (TraH, TraI, and TraJ) at the transfer origin resulting in the assembly of a specialized nucleoprotein complex - the relaxosome. This is Protein TraH (traH) from Escherichia coli.